Reading from the N-terminus, the 155-residue chain is Small ribosomal subunit protein uS7 (155 aa).

Belongs to the universal ribosomal protein uS7 family. Part of the 30S ribosomal subunit. Contacts proteins S9 and S11.

Functionally, one of the primary rRNA binding proteins, it binds directly to 16S rRNA where it nucleates assembly of the head domain of the 30S subunit. Is located at the subunit interface close to the decoding center, probably blocks exit of the E-site tRNA. The polypeptide is Small ribosomal subunit protein uS7 (Prosthecochloris aestuarii (strain DSM 271 / SK 413)).